The primary structure comprises 211 residues: Thiamine-phosphate synthase (211 aa).

Residues 37–41 and N69 each bind 4-amino-2-methyl-5-(diphosphooxymethyl)pyrimidine; that span reads QLRIK. Mg(2+) is bound by residues D70 and D89. S108 contributes to the 4-amino-2-methyl-5-(diphosphooxymethyl)pyrimidine binding site. 134 to 136 contributes to the 2-[(2R,5Z)-2-carboxy-4-methylthiazol-5(2H)-ylidene]ethyl phosphate binding site; that stretch reads TQT. Residue K137 participates in 4-amino-2-methyl-5-(diphosphooxymethyl)pyrimidine binding. Residues G166 and 186–187 contribute to the 2-[(2R,5Z)-2-carboxy-4-methylthiazol-5(2H)-ylidene]ethyl phosphate site; that span reads VS.

The protein belongs to the thiamine-phosphate synthase family. The cofactor is Mg(2+).

The enzyme catalyses 2-[(2R,5Z)-2-carboxy-4-methylthiazol-5(2H)-ylidene]ethyl phosphate + 4-amino-2-methyl-5-(diphosphooxymethyl)pyrimidine + 2 H(+) = thiamine phosphate + CO2 + diphosphate. It catalyses the reaction 2-(2-carboxy-4-methylthiazol-5-yl)ethyl phosphate + 4-amino-2-methyl-5-(diphosphooxymethyl)pyrimidine + 2 H(+) = thiamine phosphate + CO2 + diphosphate. It carries out the reaction 4-methyl-5-(2-phosphooxyethyl)-thiazole + 4-amino-2-methyl-5-(diphosphooxymethyl)pyrimidine + H(+) = thiamine phosphate + diphosphate. The protein operates within cofactor biosynthesis; thiamine diphosphate biosynthesis; thiamine phosphate from 4-amino-2-methyl-5-diphosphomethylpyrimidine and 4-methyl-5-(2-phosphoethyl)-thiazole: step 1/1. In terms of biological role, condenses 4-methyl-5-(beta-hydroxyethyl)thiazole monophosphate (THZ-P) and 2-methyl-4-amino-5-hydroxymethyl pyrimidine pyrophosphate (HMP-PP) to form thiamine monophosphate (TMP). The chain is Thiamine-phosphate synthase from Escherichia coli O6:H1 (strain CFT073 / ATCC 700928 / UPEC).